A 1311-amino-acid polypeptide reads, in one-letter code: Clustered mitochondria protein homolog (1311 aa).

The tract at residues 1 to 46 (MAATNEVIPTSENPSDVSGSSQKLATEETALANGVDHEEEDSGEAG) is disordered. Over residues 7-24 (VIPTSENPSDVSGSSQKL) the composition is skewed to polar residues. Residues 335-579 (DITRTQENYL…RVTPLDITWM (245 aa)) enclose the Clu domain. Disordered regions lie at residues 629–691 (ERKR…QERI) and 915–965 (QSQT…VNAS). The segment covering 655-691 (EASKSDEPTENGELAKKADESDKDAEPSKPAADQERI) has biased composition (basic and acidic residues). Polar residues predominate over residues 915–930 (QSQTEAAAAPPTTNGE). 3 TPR repeats span residues 1034 to 1067 (ARVYNSLSMLYYQLDEKEAAMELARKAVIVSERT), 1076 to 1109 (LLNYLNLGLIAHASGETKLALTYIKHALDLWKVV), and 1118 to 1151 (ITTINNAAVMLQHLKEYHDSRTWFEASLKICEEV). The tract at residues 1236–1311 (VSPRVTLGQT…RGGAAAAAGK (76 aa)) is disordered. The span at 1242–1253 (LGQTQLQPQVGQ) shows a compositional bias: polar residues. Over residues 1259–1279 (AGRDSRSSRGLDSRSIDELLK) the composition is skewed to basic and acidic residues. The span at 1289–1303 (KNKKRPGRSNPKRRG) shows a compositional bias: basic residues.

It belongs to the CLU family. In terms of assembly, may associate with the eukaryotic translation initiation factor 3 (eIF-3) complex.

The protein localises to the cytoplasm. In terms of biological role, mRNA-binding protein involved in proper cytoplasmic distribution of mitochondria. The sequence is that of Clustered mitochondria protein homolog from Sclerotinia sclerotiorum (strain ATCC 18683 / 1980 / Ss-1) (White mold).